We begin with the raw amino-acid sequence, 179 residues long: Small ribosomal subunit protein uS5 (179 aa).

Positions 22–85 constitute an S5 DRBM domain; that stretch reads MIEKLVAVNR…EYARKTMANV (64 aa).

The protein belongs to the universal ribosomal protein uS5 family. In terms of assembly, part of the 30S ribosomal subunit. Contacts proteins S4 and S8.

In terms of biological role, with S4 and S12 plays an important role in translational accuracy. Its function is as follows. Located at the back of the 30S subunit body where it stabilizes the conformation of the head with respect to the body. The polypeptide is Small ribosomal subunit protein uS5 (Xylella fastidiosa (strain 9a5c)).